Here is a 154-residue protein sequence, read N- to C-terminus: Xanthine-guanine phosphoribosyltransferase (154 aa).

5-phospho-alpha-D-ribose 1-diphosphate-binding positions include 37–38 (RG), Arg-69, and 88–96 (EDLVDSGDT). A GMP-binding site is contributed by Arg-69. Residue Asp-89 coordinates Mg(2+). Asp-92 and Ile-135 together coordinate guanine. Xanthine contacts are provided by Asp-92 and Ile-135. Residues 92–96 (DSGDT) and 134–135 (WI) contribute to the GMP site.

This sequence belongs to the purine/pyrimidine phosphoribosyltransferase family. XGPT subfamily. In terms of assembly, homotetramer. Requires Mg(2+) as cofactor.

It is found in the cell inner membrane. It catalyses the reaction GMP + diphosphate = guanine + 5-phospho-alpha-D-ribose 1-diphosphate. It carries out the reaction XMP + diphosphate = xanthine + 5-phospho-alpha-D-ribose 1-diphosphate. The catalysed reaction is IMP + diphosphate = hypoxanthine + 5-phospho-alpha-D-ribose 1-diphosphate. It participates in purine metabolism; GMP biosynthesis via salvage pathway; GMP from guanine: step 1/1. It functions in the pathway purine metabolism; XMP biosynthesis via salvage pathway; XMP from xanthine: step 1/1. Functionally, purine salvage pathway enzyme that catalyzes the transfer of the ribosyl-5-phosphate group from 5-phospho-alpha-D-ribose 1-diphosphate (PRPP) to the N9 position of the 6-oxopurines guanine and xanthine to form the corresponding ribonucleotides GMP (guanosine 5'-monophosphate) and XMP (xanthosine 5'-monophosphate), with the release of PPi. To a lesser extent, also acts on hypoxanthine. This Vibrio campbellii (strain ATCC BAA-1116) protein is Xanthine-guanine phosphoribosyltransferase.